A 243-amino-acid polypeptide reads, in one-letter code: Large ribosomal subunit protein uL2 (243 aa).

Disordered regions lie at residues 1–23 (MGKRIRPQRLGRGGPTYRAPSHR) and 204–243 (PFGGGNHQSPGKPTTIARGDPPGRKVGHIAARKTGRGGRR). A compositionally biased stretch (basic residues) spans 228-243 (KVGHIAARKTGRGGRR).

This sequence belongs to the universal ribosomal protein uL2 family. Part of the 50S ribosomal subunit. Forms a bridge to the 30S subunit in the 70S ribosome.

One of the primary rRNA binding proteins. Required for association of the 30S and 50S subunits to form the 70S ribosome, for tRNA binding and peptide bond formation. It has been suggested to have peptidyltransferase activity; this is somewhat controversial. Makes several contacts with the 16S rRNA in the 70S ribosome. The sequence is that of Large ribosomal subunit protein uL2 from Methanopyrus kandleri (strain AV19 / DSM 6324 / JCM 9639 / NBRC 100938).